The following is a 1292-amino-acid chain: Epidermal growth factor receptor (1292 aa).

At 1–641 (MYNNYNLCHI…AGLIENELQP (641 aa)) the chain is on the extracellular side. Asparagine 31, asparagine 224, asparagine 263, asparagine 323, asparagine 342, asparagine 600, and asparagine 605 each carry an N-linked (GlcNAc...) asparagine glycan. The helical transmembrane segment at 642–662 (AILAGVAVFALAFLVVAAIIM) threads the bilayer. The Cytoplasmic segment spans residues 663 to 1292 (YFWRVRAKAK…KPLRKNETTV (630 aa)). Threonine 675 is subject to Phosphothreonine; by PKC. A Protein kinase domain is found at 711–978 (MRKGGILGYG…KMSRDPGRYL (268 aa)). ATP contacts are provided by residues 717-725 (LGYGAFGNV) and lysine 744. The Proton acceptor role is filled by aspartate 836. The disordered stretch occupies residues 1022–1066 (PKSRAPIPPGLSASSTSGSPPNTPVKPCWPNGKPLAADSPTPQNQ). A Phosphotyrosine; by autocatalysis modification is found at tyrosine 1166. The disordered stretch occupies residues 1253–1292 (SQVRQRSSEEESDHEYYNDFDRLERELQPLKPLRKNETTV). Basic and acidic residues predominate over residues 1258–1292 (RSSEEESDHEYYNDFDRLERELQPLKPLRKNETTV).

Belongs to the protein kinase superfamily. Tyr protein kinase family. EGF receptor subfamily.

Its subcellular location is the membrane. The catalysed reaction is L-tyrosyl-[protein] + ATP = O-phospho-L-tyrosyl-[protein] + ADP + H(+). Its activity is regulated as follows. Activated by MRJP1 during queen determination of honeybee larvae. Functionally, upon binding to its ligands, transduces the signal through the ras-raf-MAPK pathway and is involved in a myriad of developmental decisions. Involved in the determination of adult size, ovary development, and development timing, especially during queen determination of honeybee larvae. May have an important role in the prolongation of longevity in queens. The sequence is that of Epidermal growth factor receptor (Egfr) from Apis mellifera (Honeybee).